The following is a 309-amino-acid chain: Homoserine kinase (309 aa).

Residue 91–101 coordinates ATP; that stretch reads PIGSGLGSSAC.

It belongs to the GHMP kinase family. Homoserine kinase subfamily.

It localises to the cytoplasm. It carries out the reaction L-homoserine + ATP = O-phospho-L-homoserine + ADP + H(+). Its pathway is amino-acid biosynthesis; L-threonine biosynthesis; L-threonine from L-aspartate: step 4/5. Catalyzes the ATP-dependent phosphorylation of L-homoserine to L-homoserine phosphate. This Yersinia enterocolitica serotype O:8 / biotype 1B (strain NCTC 13174 / 8081) protein is Homoserine kinase.